A 618-amino-acid chain; its full sequence is Glutamine--fructose-6-phosphate aminotransferase [isomerizing] (618 aa).

Residue cysteine 2 is the Nucleophile; for GATase activity of the active site. Residues 2 to 226 (CGIVGYAGRN…DFETAVLSPT (225 aa)) enclose the Glutamine amidotransferase type-2 domain. The interval 69–94 (HTRWATHGRPSTKNAHPHNSGGNPGK) is disordered. SIS domains are found at residues 295-434 (SEDE…VRDR) and 467-608 (CAEG…IDKP). Lysine 613 (for Fru-6P isomerization activity) is an active-site residue.

Homodimer.

The protein resides in the cytoplasm. It catalyses the reaction D-fructose 6-phosphate + L-glutamine = D-glucosamine 6-phosphate + L-glutamate. Functionally, catalyzes the first step in hexosamine metabolism, converting fructose-6P into glucosamine-6P using glutamine as a nitrogen source. The chain is Glutamine--fructose-6-phosphate aminotransferase [isomerizing] from Methanosarcina acetivorans (strain ATCC 35395 / DSM 2834 / JCM 12185 / C2A).